Here is a 320-residue protein sequence, read N- to C-terminus: Ribosomal RNA small subunit methyltransferase H (320 aa).

S-adenosyl-L-methionine contacts are provided by residues glycine 36–histidine 38, aspartate 56, phenylalanine 82, aspartate 103, and glutamine 110.

It belongs to the methyltransferase superfamily. RsmH family.

The protein localises to the cytoplasm. The catalysed reaction is cytidine(1402) in 16S rRNA + S-adenosyl-L-methionine = N(4)-methylcytidine(1402) in 16S rRNA + S-adenosyl-L-homocysteine + H(+). Specifically methylates the N4 position of cytidine in position 1402 (C1402) of 16S rRNA. The protein is Ribosomal RNA small subunit methyltransferase H of Chromobacterium violaceum (strain ATCC 12472 / DSM 30191 / JCM 1249 / CCUG 213 / NBRC 12614 / NCIMB 9131 / NCTC 9757 / MK).